The following is a 112-amino-acid chain: S-adenosylmethionine decarboxylase proenzyme (112 aa).

The Schiff-base intermediate with substrate; via pyruvic acid role is filled by serine 62. Serine 62 is modified (pyruvic acid (Ser); by autocatalysis). The active-site Proton acceptor; for processing activity is the histidine 67. Cysteine 82 acts as the Proton donor; for catalytic activity in catalysis.

This sequence belongs to the prokaryotic AdoMetDC family. Type 1 subfamily. In terms of assembly, heterotetramer of two alpha and two beta chains arranged as a dimer of alpha/beta heterodimers. Pyruvate is required as a cofactor. In terms of processing, is synthesized initially as an inactive proenzyme. Formation of the active enzyme involves a self-maturation process in which the active site pyruvoyl group is generated from an internal serine residue via an autocatalytic post-translational modification. Two non-identical subunits are generated from the proenzyme in this reaction, and the pyruvate is formed at the N-terminus of the alpha chain, which is derived from the carboxyl end of the proenzyme. The post-translation cleavage follows an unusual pathway, termed non-hydrolytic serinolysis, in which the side chain hydroxyl group of the serine supplies its oxygen atom to form the C-terminus of the beta chain, while the remainder of the serine residue undergoes an oxidative deamination to produce ammonia and the pyruvoyl group blocking the N-terminus of the alpha chain.

It catalyses the reaction S-adenosyl-L-methionine + H(+) = S-adenosyl 3-(methylsulfanyl)propylamine + CO2. Its pathway is amine and polyamine biosynthesis; S-adenosylmethioninamine biosynthesis; S-adenosylmethioninamine from S-adenosyl-L-methionine: step 1/1. Functionally, catalyzes the decarboxylation of S-adenosylmethionine to S-adenosylmethioninamine (dcAdoMet), the propylamine donor required for the synthesis of the polyamines spermine and spermidine from the diamine putrescine. The sequence is that of S-adenosylmethionine decarboxylase proenzyme from Archaeoglobus fulgidus (strain ATCC 49558 / DSM 4304 / JCM 9628 / NBRC 100126 / VC-16).